The following is a 301-amino-acid chain: Probable alpha-L-glutamate ligase 2 (301 aa).

The 184-residue stretch at 104-287 (MQLLSRKGIG…VASMIIEFIV (184 aa)) folds into the ATP-grasp domain. ATP is bound by residues lysine 141, 178 to 179 (EY), aspartate 187, and 211 to 213 (RSN). 3 residues coordinate Mg(2+): aspartate 248, glutamate 260, and asparagine 262. 3 residues coordinate Mn(2+): aspartate 248, glutamate 260, and asparagine 262.

It belongs to the RimK family. The cofactor is Mg(2+). It depends on Mn(2+) as a cofactor.

This Pseudoalteromonas atlantica (strain T6c / ATCC BAA-1087) protein is Probable alpha-L-glutamate ligase 2.